A 103-amino-acid chain; its full sequence is Large ribosomal subunit protein bL21 (103 aa).

It belongs to the bacterial ribosomal protein bL21 family. As to quaternary structure, part of the 50S ribosomal subunit. Contacts protein L20.

This protein binds to 23S rRNA in the presence of protein L20. In Clostridioides difficile (strain 630) (Peptoclostridium difficile), this protein is Large ribosomal subunit protein bL21.